The chain runs to 167 residues: Protein tyrosine phosphatase type IVA 2 (167 aa).

The 154-residue stretch at 5–158 (APVEISYENM…YRPKMRLRFR (154 aa)) folds into the Tyrosine-protein phosphatase domain. A disulfide bridge connects residues Cys46 and Cys101. Asp69 serves as the catalytic Proton donor. Cys101 acts as the Phosphocysteine intermediate in catalysis. 102–107 (VAGLGR) provides a ligand contact to phosphate. Arg107 is a substrate binding site. Cys164 carries the post-translational modification Cysteine methyl ester. Cys164 is lipidated: S-farnesyl cysteine. The propeptide at 165–167 (CVQ) is removed in mature form.

This sequence belongs to the protein-tyrosine phosphatase family. As to quaternary structure, in contrast to PTP4A1 and PTP4A3, does not interact with tubulin. Interacts with RABGGTB. Post-translationally, farnesylated. Farnesylation is required for membrane targeting and for interaction with RABGGTB. In terms of tissue distribution, expressed in skeletal muscle, and at lower levels in liver, lung, heart, kidney, brain, testis and spleen.

It is found in the cell membrane. The protein localises to the early endosome. The protein resides in the cytoplasm. It carries out the reaction O-phospho-L-tyrosyl-[protein] + H2O = L-tyrosyl-[protein] + phosphate. With respect to regulation, inhibited by sodium orthovanadate and pentamidine. Functionally, protein tyrosine phosphatase which stimulates progression from G1 into S phase during mitosis. Inhibits geranylgeranyl transferase type II activity by blocking the association between RABGGTA and RABGGTB. The polypeptide is Protein tyrosine phosphatase type IVA 2 (Ptp4a2) (Mus musculus (Mouse)).